Consider the following 148-residue polypeptide: Large-conductance mechanosensitive channel (148 aa).

Helical transmembrane passes span 16–36 (VMDL…VNSI) and 89–109 (GSFI…FLMV).

It belongs to the MscL family. As to quaternary structure, homopentamer.

It localises to the cell inner membrane. Channel that opens in response to stretch forces in the membrane lipid bilayer. May participate in the regulation of osmotic pressure changes within the cell. The chain is Large-conductance mechanosensitive channel from Paraburkholderia phytofirmans (strain DSM 17436 / LMG 22146 / PsJN) (Burkholderia phytofirmans).